A 426-amino-acid chain; its full sequence is Probable histidine--tRNA ligase (426 aa).

It belongs to the class-II aminoacyl-tRNA synthetase family. Homodimer.

It localises to the cytoplasm. It carries out the reaction tRNA(His) + L-histidine + ATP = L-histidyl-tRNA(His) + AMP + diphosphate + H(+). The chain is Probable histidine--tRNA ligase (hisS) from Tropheryma whipplei (strain TW08/27) (Whipple's bacillus).